Consider the following 490-residue polypeptide: Glutamate--tRNA ligase 1 (490 aa).

Positions 27–37 (PSPTGYLHIGG) match the 'HIGH' region motif. Residues 254-258 (KLSKR) carry the 'KMSKS' region motif. Residue Lys-257 coordinates ATP.

It belongs to the class-I aminoacyl-tRNA synthetase family. Glutamate--tRNA ligase type 1 subfamily. As to quaternary structure, monomer.

Its subcellular location is the cytoplasm. The catalysed reaction is tRNA(Glu) + L-glutamate + ATP = L-glutamyl-tRNA(Glu) + AMP + diphosphate. Catalyzes the attachment of glutamate to tRNA(Glu) in a two-step reaction: glutamate is first activated by ATP to form Glu-AMP and then transferred to the acceptor end of tRNA(Glu). The sequence is that of Glutamate--tRNA ligase 1 from Sphingopyxis alaskensis (strain DSM 13593 / LMG 18877 / RB2256) (Sphingomonas alaskensis).